Reading from the N-terminus, the 284-residue chain is UTP--glucose-1-phosphate uridylyltransferase (284 aa).

The protein belongs to the UDPGP type 2 family.

It catalyses the reaction alpha-D-glucose 1-phosphate + UTP + H(+) = UDP-alpha-D-glucose + diphosphate. The polypeptide is UTP--glucose-1-phosphate uridylyltransferase (celA) (Komagataeibacter xylinus (Gluconacetobacter xylinus)).